The chain runs to 357 residues: GTPase Obg (357 aa).

In terms of domain architecture, Obg spans 1–159; it reads MKFVDEAEIQ…RTLKLELKLL (159 aa). The OBG-type G domain occupies 160-343; that stretch reads ADIGMLGFPN…IMKSAMTLFE (184 aa). Residues 166 to 173, 191 to 195, 213 to 216, 293 to 296, and 324 to 326 contribute to the GTP site; these read GFPNVGKS, FTTLY, DVPG, NKAD, and SAV. Mg(2+) is bound by residues Ser173 and Thr193.

Belongs to the TRAFAC class OBG-HflX-like GTPase superfamily. OBG GTPase family. Monomer. Requires Mg(2+) as cofactor.

It is found in the cytoplasm. In terms of biological role, an essential GTPase which binds GTP, GDP and possibly (p)ppGpp with moderate affinity, with high nucleotide exchange rates and a fairly low GTP hydrolysis rate. Plays a role in control of the cell cycle, stress response, ribosome biogenesis and in those bacteria that undergo differentiation, in morphogenesis control. The chain is GTPase Obg from Xylella fastidiosa (strain M23).